Consider the following 802-residue polypeptide: MNQSQNFHNIDLGHYGAQGSNQSFNNNNNGNNGMMMNQQQMQQHVVPHLHHLQQQQQQPQQQQLRNVPDYSNSPNGTTNGSTMSPNCINTNNNNNNNNNNNNNSNNNNNNNNNASNNLTSNKSSSTNTPQIGQLQASPANLTNSPSAISSPITISNNSSLNSPSTTSSPNLLLNGTSNKRIMISQQTCLVEEKFSKNGVQKNVHVVVKNNPFLLTLSLLDSSLNFHQLTPEVQLVYDSESLKEVDSATVKPLEYKTRANEEGDQLTIELRIKVLSSQLEDMLFRAKVKIVDPRTRKETHGLSVITHPIRVVSKPDQVKKKAKKRKRAPTDSLMDTLNRIEHQQKEQQRLLKKLCYHDKENNIIQLIQQQQQQQQLLNNVTNNINNNNNINNNNNNNNNNNNNNNNNNNNNNNNNNNNNNNNTTSTTTTTTTTTSSCNNNNNNNNENNEHIVKIENTECNNNNNNIINNTENDENINKPILNSKDEFQSAFKEFIGAFKQLQCLDPDGADGAFKINTCANDAQTMCEILEMVKVELKKDENFKDKCGGSSGGACGENNPDNPCSCKVCPYKQKVDHINQSYETYFNMFNPSNSNSVVPQQSQQLQQQQIQQQQQSQQQVQQQQQQQMQQQPQQQQQQPQQQQQNQQQGQQPQQQQQQGQLDYTTYIDPQLQMQQQLQMQQAAQQQYMQQTMDQQQQQQYYMQQYHLQQQQQQQQAQRYLMQQQYMQQQAQQQQQQHQQVAIQQQQQQNQQQNQQQNQQQQNQSPQNQQSLDFQNANNFIDFNSGLGFMNFPNINFGDMGFSAV.

Disordered regions lie at residues Met-1–Ile-148, Ile-154–Leu-173, Asn-381–Asn-446, and Gln-636–Gln-658. Positions Asn-25–Gln-63 are enriched in low complexity. The segment covering Asp-69–Ile-88 has biased composition (polar residues). The segment covering Asn-89–Thr-128 has biased composition (low complexity). Positions Pro-129–Thr-142 are enriched in polar residues. The span at Asn-381–Glu-445 shows a compositional bias: low complexity.

In terms of tissue distribution, expressed in the prestalk cells that constitute the slug tip (pstA cells) and in prespore cells (at protein level). Not expressed in the band of prestalk cells that lies behind the slug tip (pstO cells). Highly expressed in pstO derived papilla cells during culmination.

Its subcellular location is the nucleus. The protein localises to the nucleoplasm. Functionally, essential for normal culmination. May function as a transcriptional regulator. The sequence is that of Putative transcriptional regulator cudA (cudA) from Dictyostelium discoideum (Social amoeba).